The following is a 182-amino-acid chain: Oligoribonuclease (182 aa).

The Exonuclease domain occupies 8–171 (LIWLDMEMTG…ADIHESIGEL (164 aa)). Tyr129 is a catalytic residue.

It belongs to the oligoribonuclease family.

The protein resides in the cytoplasm. Functionally, 3'-to-5' exoribonuclease specific for small oligoribonucleotides. This is Oligoribonuclease from Azoarcus sp. (strain BH72).